Reading from the N-terminus, the 243-residue chain is Carboxy-S-adenosyl-L-methionine synthase (243 aa).

S-adenosyl-L-methionine-binding positions include Tyr40, 65–67 (GCS), 90–91 (DN), 118–119 (DI), Asn133, and Arg200.

This sequence belongs to the class I-like SAM-binding methyltransferase superfamily. Cx-SAM synthase family. As to quaternary structure, homodimer.

The catalysed reaction is prephenate + S-adenosyl-L-methionine = carboxy-S-adenosyl-L-methionine + 3-phenylpyruvate + H2O. Functionally, catalyzes the conversion of S-adenosyl-L-methionine (SAM) to carboxy-S-adenosyl-L-methionine (Cx-SAM). This chain is Carboxy-S-adenosyl-L-methionine synthase, found in Shewanella baltica (strain OS155 / ATCC BAA-1091).